We begin with the raw amino-acid sequence, 194 residues long: Superoxide dismutase [Cu-Zn] (194 aa).

The first 20 residues, 1 to 20 (MTRPLALIIFLVAILTNTDP), serve as a signal peptide directing secretion. Cu cation contacts are provided by His-85 and His-104. Residues Cys-96 and Cys-188 are joined by a disulfide bond. Residues His-104, His-112, His-121, and Asp-124 each coordinate Zn(2+). His-162 contacts Cu cation.

This sequence belongs to the Cu-Zn superoxide dismutase family. Homodimer. Cu cation serves as cofactor. Zn(2+) is required as a cofactor.

It catalyses the reaction 2 superoxide + 2 H(+) = H2O2 + O2. Functionally, destroys radicals which are normally produced within the cells and which are toxic to biological systems. This Ramazzottius varieornatus (Water bear) protein is Superoxide dismutase [Cu-Zn].